The following is an 882-amino-acid chain: Alanine--tRNA ligase (882 aa).

The Zn(2+) site is built by His570, His574, Cys672, and His676.

Belongs to the class-II aminoacyl-tRNA synthetase family. Zn(2+) serves as cofactor.

The protein resides in the cytoplasm. The enzyme catalyses tRNA(Ala) + L-alanine + ATP = L-alanyl-tRNA(Ala) + AMP + diphosphate. In terms of biological role, catalyzes the attachment of alanine to tRNA(Ala) in a two-step reaction: alanine is first activated by ATP to form Ala-AMP and then transferred to the acceptor end of tRNA(Ala). Also edits incorrectly charged Ser-tRNA(Ala) and Gly-tRNA(Ala) via its editing domain. The chain is Alanine--tRNA ligase from Xanthomonas oryzae pv. oryzae (strain MAFF 311018).